The sequence spans 202 residues: Virulence protein F (202 aa).

Positions 1–15 are enriched in polar residues; sequence MRNSSLRDASGSNDA. Positions 1-21 are disordered; the sequence is MRNSSLRDASGSNDAQVPHKT. Positions 20–42 constitute an F-box domain; sequence KTELLNLPDHVLTEVAKRLATNN.

As to quaternary structure, component of SCF(virF) E3 ubiquitin ligase complexes. Interacts with host VIP1 and SKP1A. Interacts with Arabidopsis thaliana ENAP1/VFP3 and VFP5 in the host cell nucleus.

The protein localises to the host nucleus. In the host plant, component of SCF(virF) E3 ubiquitin ligase complexes, which mediate the ubiquitination and subsequent proteasomal degradation of target proteins such as the host VIP1, after its implication in T-DNA translocation to the host nucleus. Required for the formation of tumors of a wild-type size on certain plant species only. This Agrobacterium tumefaciens (strain 15955) protein is Virulence protein F.